The primary structure comprises 291 residues: Polyamine aminopropyltransferase (291 aa).

Residues 5–245 (PGPVSLIEPL…YAVNYIIGSL (241 aa)) form the PABS domain. Q36 serves as a coordination point for S-methyl-5'-thioadenosine. The spermidine site is built by H67 and E91. S-methyl-5'-thioadenosine contacts are provided by residues D111 and 143–144 (DG). D164 acts as the Proton acceptor in catalysis.

The protein belongs to the spermidine/spermine synthase family. Homodimer or homotetramer.

It localises to the cytoplasm. The enzyme catalyses S-adenosyl 3-(methylsulfanyl)propylamine + putrescine = S-methyl-5'-thioadenosine + spermidine + H(+). It participates in amine and polyamine biosynthesis; spermidine biosynthesis; spermidine from putrescine: step 1/1. In terms of biological role, catalyzes the irreversible transfer of a propylamine group from the amino donor S-adenosylmethioninamine (decarboxy-AdoMet) to putrescine (1,4-diaminobutane) to yield spermidine. The sequence is that of Polyamine aminopropyltransferase from Pyrobaculum islandicum (strain DSM 4184 / JCM 9189 / GEO3).